The following is a 486-amino-acid chain: Transcription enhancer factor-like protein egl-44 (486 aa).

Over residues 47 to 57 the composition is skewed to low complexity; it reads GTTTPTTTSGG. A disordered region spans residues 47–87; sequence GTTTPTTTSGGQMMTLSPPAGDGPGSAGSMAPESTSSLSDL. A DNA-binding region (TEA) is located at residues 88–164; it reads SGDAEGVWSI…QVLARKKLRD (77 aa). Residues 165–188 form a disordered region; that stretch reads EQAKKKGDIPSLLQQASPPGGVKS.

In terms of assembly, interacts (via N-terminus) with egl-46 (via C-terminus); the interaction is direct; the interaction may regulate transcription. Interacts with yap-1 (via WW domain); the interaction may regulate transcription. Expressed in HSN neurons in embryos and in the FLP neurons from the L1 stage through to adults. Not expressed in touch cells. Also expressed in larval hypodermis, intestine, pharyngeal muscle and other neurons. In adults expression is lost from some neurons, is weaker in the hypodermis but remains in the intestine. Expressed in HOB neuron, ray neurons RnA and RnB, and the ray structural cell, Rnst; rays are male-specific genital sensilla (simple sense organs).

Its subcellular location is the nucleus. Transcription factor. Binds to DNA sequence motif 5'-CATNNNNAAATGCAT-3' as a heterodimer with egl-46. Represses expression of genes involved in differentiation of touch receptor neurons (TRN), probably acting as a heterodimer with egl-46, perhaps by occupying similar cis-regulatory elements as an unc-86/mec-3 heterodimer. Plays a role in cell fate specification of neurons, including the hook neuron HOB, and touch receptor neurons. Involved in male mating behavior, acting in concert with egl-46, via modulation of expression of polycystins lov-1 and pkd-2, homeodomain protein ceh-26, and neuropeptide-like protein nlp-8. Acts upstream of egl-46 to prevent touch cell differentiation in FLP neurons. Plays a role in neuron differentiation by repressing the expression of zag-1 in FLP neurons, probably acting as a heterodimer with egl-46; because zag-1 represses expression of egl-46 and egl-44, together these proteins form a bistable, negative-feedback loop that regulates the choice between neuronal fates. Also promotes HSN neuron development. In association with egl-46, regulates cell cycle exit in the neuronal Q cell lineage. Plays a role in specifying commissural dendrites of the PVD nociceptive neurons, acting in concert with egl-46. May be involved in thermal stress response downstream of yap-1. The polypeptide is Transcription enhancer factor-like protein egl-44 (egl-44) (Caenorhabditis elegans).